A 188-amino-acid polypeptide reads, in one-letter code: Ion-translocating oxidoreductase complex subunit B (188 aa).

The segment at 1-23 (MIEAAVSMSALGLGLGLLLGVAA) is hydrophobic. The 60-residue stretch at 29–88 (ESPPILDAIEGILPGTNCGACGYPGCRGLAEAMSEGAAPVTACAPGGRDVALALAAIVET) folds into the 4Fe-4S domain. [4Fe-4S] cluster is bound by residues Cys46, Cys49, Cys54, Cys71, Cys113, Cys116, Cys119, Cys123, Cys143, Cys146, Cys149, and Cys153. 4Fe-4S ferredoxin-type domains follow at residues 104–133 (TVAF…GANR) and 134–163 (QIHT…ARVK).

Belongs to the 4Fe4S bacterial-type ferredoxin family. RnfB subfamily. The complex is composed of six subunits: RnfA, RnfB, RnfC, RnfD, RnfE and RnfG. Requires [4Fe-4S] cluster as cofactor.

The protein localises to the cellular chromatophore membrane. Its function is as follows. Part of a membrane-bound complex that couples electron transfer with translocation of ions across the membrane. This Cereibacter sphaeroides (strain ATCC 17029 / ATH 2.4.9) (Rhodobacter sphaeroides) protein is Ion-translocating oxidoreductase complex subunit B.